The chain runs to 386 residues: MNIHEYQAKEILRKYGVPTSTGLVVTKTEKINETIDKLNTKVYVIKAQIHAGGRGKAGGVKVAKSKEEAKKVAHDMFGINLVTHQTGPQGQKVNRIYIESGCDILKEYYFSIVFDRSASCITFIASTEGGVDIEAVAEKMPEKIIKFAVDPATGLQDFHMRGIAYELGFKDNQAKQMKEIVKAVYNAFIETDATQIEINPLIINSYGNLLALDAKITFDDNGLFKHPNITAMRDHDEEDPLETRAANAGLSYVKMDGNIGCMVNGAGLAMATMDIIKLYGALPANFLDVGGGADRERVKEALKIILSDKEVKGILVNIFGGIMRCDIIAEGIIAAAKDIGIKVPLVVRLAGTNVEKGKEILSNSDLKIIPAHDLADAANKIVEAIR.

The ATP-grasp domain maps to 9–244 (KEILRKYGVP…HDEEDPLETR (236 aa)). ATP-binding positions include lysine 46, 53-55 (GRG), glutamate 99, cysteine 102, and glutamate 107. Mg(2+) contacts are provided by asparagine 199 and aspartate 213. Substrate is bound by residues asparagine 264 and 321-323 (GIM).

It belongs to the succinate/malate CoA ligase beta subunit family. In terms of assembly, heterotetramer of two alpha and two beta subunits. Mg(2+) serves as cofactor.

It catalyses the reaction succinate + ATP + CoA = succinyl-CoA + ADP + phosphate. It carries out the reaction GTP + succinate + CoA = succinyl-CoA + GDP + phosphate. It functions in the pathway carbohydrate metabolism; tricarboxylic acid cycle; succinate from succinyl-CoA (ligase route): step 1/1. Functionally, succinyl-CoA synthetase functions in the citric acid cycle (TCA), coupling the hydrolysis of succinyl-CoA to the synthesis of either ATP or GTP and thus represents the only step of substrate-level phosphorylation in the TCA. The beta subunit provides nucleotide specificity of the enzyme and binds the substrate succinate, while the binding sites for coenzyme A and phosphate are found in the alpha subunit. This Rickettsia prowazekii (strain Madrid E) protein is Succinate--CoA ligase [ADP-forming] subunit beta.